Reading from the N-terminus, the 308-residue chain is Acetaldehyde dehydrogenase (308 aa).

10–13 contributes to the NAD(+) binding site; the sequence is SGNI. Cys128 acts as the Acyl-thioester intermediate in catalysis. NAD(+) is bound by residues 159-167 and Asn285; that span reads SAGPGTRAN.

This sequence belongs to the acetaldehyde dehydrogenase family.

The catalysed reaction is acetaldehyde + NAD(+) + CoA = acetyl-CoA + NADH + H(+). The protein is Acetaldehyde dehydrogenase of Salinispora tropica (strain ATCC BAA-916 / DSM 44818 / JCM 13857 / NBRC 105044 / CNB-440).